The chain runs to 876 residues: Alanine--tRNA ligase (876 aa).

H564, H568, C666, and H670 together coordinate Zn(2+).

Belongs to the class-II aminoacyl-tRNA synthetase family. Requires Zn(2+) as cofactor.

Its subcellular location is the cytoplasm. The enzyme catalyses tRNA(Ala) + L-alanine + ATP = L-alanyl-tRNA(Ala) + AMP + diphosphate. Its function is as follows. Catalyzes the attachment of alanine to tRNA(Ala) in a two-step reaction: alanine is first activated by ATP to form Ala-AMP and then transferred to the acceptor end of tRNA(Ala). Also edits incorrectly charged Ser-tRNA(Ala) and Gly-tRNA(Ala) via its editing domain. The chain is Alanine--tRNA ligase from Colwellia psychrerythraea (strain 34H / ATCC BAA-681) (Vibrio psychroerythus).